The following is a 59-amino-acid chain: Arabinogalactan protein 13 (59 aa).

The first 27 residues, 1–27 (MEAMKMRLFVAVLVAAMAFSAVQQAAA), serve as a signal peptide directing secretion. A 4-hydroxyproline mark is found at P31, P33, and P35. O-linked (Ara...) hydroxyproline glycans are attached at residues P31, P33, and P35. A lipid anchor (GPI-anchor amidated serine) is attached at S37. Positions 38 to 59 (DASLAIPAFFASVATLAFGFLF) are cleaved as a propeptide — removed in mature form.

This sequence belongs to the AG-peptide AGP family. Post-translationally, contains 4-hydroxyproline; hydroxylated on Pro-31, Pro-33 and Pro-35. In terms of processing, O-glycosylated on hydroxyprolines; noncontiguous hydroxylproline residues are glycosylated with arabinogalactan.

It is found in the cell membrane. Proteoglycan that seems to be implicated in diverse developmental roles such as differentiation, cell-cell recognition, embryogenesis and programmed cell death. In Arabidopsis thaliana (Mouse-ear cress), this protein is Arabinogalactan protein 13.